Reading from the N-terminus, the 396-residue chain is Ornithine aminotransferase 2 (396 aa).

Lys255 is subject to N6-(pyridoxal phosphate)lysine.

Belongs to the class-III pyridoxal-phosphate-dependent aminotransferase family. OAT subfamily. Pyridoxal 5'-phosphate is required as a cofactor.

The protein resides in the cytoplasm. It carries out the reaction a 2-oxocarboxylate + L-ornithine = L-glutamate 5-semialdehyde + an L-alpha-amino acid. The protein operates within amino-acid biosynthesis; L-proline biosynthesis; L-glutamate 5-semialdehyde from L-ornithine: step 1/1. Its function is as follows. Catalyzes the interconversion of ornithine to glutamate semialdehyde. This Staphylococcus saprophyticus subsp. saprophyticus (strain ATCC 15305 / DSM 20229 / NCIMB 8711 / NCTC 7292 / S-41) protein is Ornithine aminotransferase 2.